The chain runs to 419 residues: Gamma-glutamyl phosphate reductase (419 aa).

The protein belongs to the gamma-glutamyl phosphate reductase family.

Its subcellular location is the cytoplasm. It carries out the reaction L-glutamate 5-semialdehyde + phosphate + NADP(+) = L-glutamyl 5-phosphate + NADPH + H(+). The protein operates within amino-acid biosynthesis; L-proline biosynthesis; L-glutamate 5-semialdehyde from L-glutamate: step 2/2. In terms of biological role, catalyzes the NADPH-dependent reduction of L-glutamate 5-phosphate into L-glutamate 5-semialdehyde and phosphate. The product spontaneously undergoes cyclization to form 1-pyrroline-5-carboxylate. The polypeptide is Gamma-glutamyl phosphate reductase (Yersinia enterocolitica serotype O:8 / biotype 1B (strain NCTC 13174 / 8081)).